The following is a 377-amino-acid chain: N-acetyldiaminopimelate deacetylase (377 aa).

Asp-70 is an active-site residue. Glu-129 serves as the catalytic Proton acceptor.

This sequence belongs to the peptidase M20A family. N-acetyldiaminopimelate deacetylase subfamily.

The enzyme catalyses N-acetyl-(2S,6S)-2,6-diaminopimelate + H2O = (2S,6S)-2,6-diaminopimelate + acetate. It functions in the pathway amino-acid biosynthesis; L-lysine biosynthesis via DAP pathway; LL-2,6-diaminopimelate from (S)-tetrahydrodipicolinate (acetylase route): step 3/3. Its function is as follows. Catalyzes the conversion of N-acetyl-diaminopimelate to diaminopimelate and acetate. The polypeptide is N-acetyldiaminopimelate deacetylase (Geobacillus thermodenitrificans (strain NG80-2)).